Consider the following 133-residue polypeptide: 6,7-dimethyl-8-ribityllumazine synthase (133 aa).

Residues Phe-11, 43 to 45 (AYD), and 67 to 69 (AIV) each bind 5-amino-6-(D-ribitylamino)uracil. 72–73 (DT) contacts (2S)-2-hydroxy-3-oxobutyl phosphate. His-75 acts as the Proton donor in catalysis. Phe-100 contacts 5-amino-6-(D-ribitylamino)uracil. Residue Arg-115 coordinates (2S)-2-hydroxy-3-oxobutyl phosphate.

The protein belongs to the DMRL synthase family.

The enzyme catalyses (2S)-2-hydroxy-3-oxobutyl phosphate + 5-amino-6-(D-ribitylamino)uracil = 6,7-dimethyl-8-(1-D-ribityl)lumazine + phosphate + 2 H2O + H(+). It functions in the pathway cofactor biosynthesis; riboflavin biosynthesis; riboflavin from 2-hydroxy-3-oxobutyl phosphate and 5-amino-6-(D-ribitylamino)uracil: step 1/2. In terms of biological role, catalyzes the formation of 6,7-dimethyl-8-ribityllumazine by condensation of 5-amino-6-(D-ribitylamino)uracil with 3,4-dihydroxy-2-butanone 4-phosphate. This is the penultimate step in the biosynthesis of riboflavin. The protein is 6,7-dimethyl-8-ribityllumazine synthase of Halobacterium salinarum (strain ATCC 29341 / DSM 671 / R1).